Here is a 30-residue protein sequence, read N- to C-terminus: Bowman-Birk type proteinase inhibitor 3 (30 aa).

2 cysteine pairs are disulfide-bonded: C9-C24 and C14-C22.

In terms of biological role, inhibits trypsin (IC(50)=4.90 nM) and, to a lesser extent, alpha-chymotrypsin (IC(50)=1.87 uM). The protein is Bowman-Birk type proteinase inhibitor 3 of Lathyrus sativus (White vetchling).